Here is a 301-residue protein sequence, read N- to C-terminus: 5'-3' exonuclease (301 aa).

A 5'-3' exonuclease domain is found at 182–264 (GYADLALLRG…RVAADVPLPD (83 aa)).

In terms of biological role, 5'-3' exonuclease acting preferentially on double-stranded DNA. The polypeptide is 5'-3' exonuclease (Streptomyces coelicolor (strain ATCC BAA-471 / A3(2) / M145)).